Consider the following 106-residue polypeptide: Large ribosomal subunit protein eL42 (106 aa).

This sequence belongs to the eukaryotic ribosomal protein eL42 family.

In Meyerozyma guilliermondii (strain ATCC 6260 / CBS 566 / DSM 6381 / JCM 1539 / NBRC 10279 / NRRL Y-324) (Yeast), this protein is Large ribosomal subunit protein eL42 (RPL44).